A 304-amino-acid polypeptide reads, in one-letter code: PTB domain-containing engulfment adapter protein 1 (304 aa).

Position 16 is a phosphothreonine (threonine 16). The PID domain maps to 21 to 176 (SKHFIPYNAK…AGLQKRIQDL (156 aa)). A coiled-coil region spans residues 158 to 202 (KDVETRKQIAGLQKRIQDLETENMELKNKVQDLENQLRITQVSAP). Residue serine 223 is modified to Phosphoserine. A disordered region spans residues 223–246 (SPISHQSSMPTRNGTQPPPVPSRS). Residues 225 to 237 (ISHQSSMPTRNGT) show a composition bias toward polar residues.

The protein belongs to the ced-6 family. Homodimer. Interacts with clathrin. Interacts with GDP-bound ARF6, but not with GTP-bound ARF6. Part of a complex composed of GULP1, ACAP1 and ARF6. Interacts with ACAP1, LRP1, MEGF10 and STAB2. As to expression, widely expressed. Detected in macrophages, pancreas, kidney, skeletal muscle, heart, colon, intestine, lung, placenta and ovary.

The protein resides in the cytoplasm. In terms of biological role, may function as an adapter protein. Required for efficient phagocytosis of apoptotic cells. Modulates cellular glycosphingolipid and cholesterol transport. May play a role in the internalization and endosomal trafficking of various LRP1 ligands, such as PSAP. Increases cellular levels of GTP-bound ARF6. This is PTB domain-containing engulfment adapter protein 1 (GULP1) from Homo sapiens (Human).